The primary structure comprises 82 residues: Small ribosomal subunit protein bS18 (82 aa).

It belongs to the bacterial ribosomal protein bS18 family. In terms of assembly, part of the 30S ribosomal subunit. Forms a tight heterodimer with protein bS6.

Functionally, binds as a heterodimer with protein bS6 to the central domain of the 16S rRNA, where it helps stabilize the platform of the 30S subunit. The polypeptide is Small ribosomal subunit protein bS18 (Chlamydia caviae (strain ATCC VR-813 / DSM 19441 / 03DC25 / GPIC) (Chlamydophila caviae)).